The primary structure comprises 270 residues: NADPH-dependent 7-cyano-7-deazaguanine reductase (270 aa).

79–81 contacts substrate; it reads IES. 81–82 contributes to the NADPH binding site; sequence SK. The Thioimide intermediate role is filled by Cys-177. Residue Asp-184 is the Proton donor of the active site. 216–217 provides a ligand contact to substrate; it reads HE. 245 to 246 is an NADPH binding site; sequence RG.

This sequence belongs to the GTP cyclohydrolase I family. QueF type 2 subfamily. As to quaternary structure, homodimer.

Its subcellular location is the cytoplasm. The enzyme catalyses 7-aminomethyl-7-carbaguanine + 2 NADP(+) = 7-cyano-7-deazaguanine + 2 NADPH + 3 H(+). It functions in the pathway tRNA modification; tRNA-queuosine biosynthesis. Its function is as follows. Catalyzes the NADPH-dependent reduction of 7-cyano-7-deazaguanine (preQ0) to 7-aminomethyl-7-deazaguanine (preQ1). This Acinetobacter baumannii (strain AB307-0294) protein is NADPH-dependent 7-cyano-7-deazaguanine reductase.